Reading from the N-terminus, the 573-residue chain is Thiol:disulfide interchange protein DsbD (573 aa).

Positions 1 to 20 (MLKRFFLLLSSLLLVCNVQA) are cleaved as a signal peptide. At 21–175 (GLFNNKPQYL…AENLSNNYLS (155 aa)) the chain is on the periplasmic side. 2 disulfides stabilise this stretch: Cys-121-Cys-126 and Cys-191-Cys-313. Residues 176–196 (IFGFLLLGIGLAFTPCVLPML) form a helical membrane-spanning segment. Over 197 to 227 (PLLSAIVIGHKNRPNTSRALLLSFTYVQGMA) the chain is Cytoplasmic. A helical membrane pass occupies residues 228 to 248 (LTYTLLGLTVAAIGLPFQVAL). Residues 249-251 (QSP) are Periplasmic-facing. A helical membrane pass occupies residues 252 to 272 (AVLISLAVLFTLLAASMFGLF). Topologically, residues 273-292 (EIRLPNTWQQKLNALSQQQQ) are cytoplasmic. The chain crosses the membrane as a helical span at residues 293–313 (GGAVGNVFIMGIIAGLVASPC). Topologically, residues 314–331 (TSAPLSGALLYVAQSGNL) are periplasmic. Residues 332–352 (LIGGLALYLLALGMGLPLILI) traverse the membrane as a helical segment. Residues 353–365 (TVFGNQILPKSGE) lie on the Cytoplasmic side of the membrane. A helical membrane pass occupies residues 366–386 (WLFKVKTAFGFVMLALPIFLI). The Periplasmic segment spans residues 387–393 (SRILPSH). A helical membrane pass occupies residues 394 to 414 (YEPFLWSTLALAFLGWLISSL). Over 415 to 425 (NYSTMLKQAVR) the chain is Cytoplasmic. Residues 426–446 (ILLFIAFGLTAYPWANLVWQT) traverse the membrane as a helical segment. A Thioredoxin domain is found at 440 to 573 (ANLVWQTTSN…NQFLAWLNRL (134 aa)). Topologically, residues 447 to 573 (TSNTAQPTTP…NQFLAWLNRL (127 aa)) are periplasmic. Residues Cys-490 and Cys-493 are joined by a disulfide bond.

This sequence belongs to the thioredoxin family. DsbD subfamily.

Its subcellular location is the cell inner membrane. The enzyme catalyses [protein]-dithiol + NAD(+) = [protein]-disulfide + NADH + H(+). The catalysed reaction is [protein]-dithiol + NADP(+) = [protein]-disulfide + NADPH + H(+). In terms of biological role, required to facilitate the formation of correct disulfide bonds in some periplasmic proteins and for the assembly of the periplasmic c-type cytochromes. Acts by transferring electrons from cytoplasmic thioredoxin to the periplasm. This transfer involves a cascade of disulfide bond formation and reduction steps. The sequence is that of Thiol:disulfide interchange protein DsbD from Haemophilus ducreyi (strain 35000HP / ATCC 700724).